A 277-amino-acid chain; its full sequence is Large ribosomal subunit protein uL2 (277 aa).

Residues 222-277 (GVAMNPVDHPHGGGEGRTSGGRHPVSPWGKSTKGKRTRSNKATDKFIMHTRHQRKK) are disordered.

This sequence belongs to the universal ribosomal protein uL2 family. In terms of assembly, part of the 50S ribosomal subunit. Forms a bridge to the 30S subunit in the 70S ribosome.

In terms of biological role, one of the primary rRNA binding proteins. Required for association of the 30S and 50S subunits to form the 70S ribosome, for tRNA binding and peptide bond formation. It has been suggested to have peptidyltransferase activity; this is somewhat controversial. Makes several contacts with the 16S rRNA in the 70S ribosome. This is Large ribosomal subunit protein uL2 from Bartonella quintana (strain Toulouse) (Rochalimaea quintana).